The following is a 137-amino-acid chain: ATP synthase epsilon chain, chloroplastic (137 aa).

The protein belongs to the ATPase epsilon chain family. As to quaternary structure, F-type ATPases have 2 components, CF(1) - the catalytic core - and CF(0) - the membrane proton channel. CF(1) has five subunits: alpha(3), beta(3), gamma(1), delta(1), epsilon(1). CF(0) has three main subunits: a, b and c.

The protein resides in the plastid. Its subcellular location is the chloroplast thylakoid membrane. Produces ATP from ADP in the presence of a proton gradient across the membrane. The protein is ATP synthase epsilon chain, chloroplastic of Agrostis stolonifera (Creeping bentgrass).